Consider the following 323-residue polypeptide: Acetyl esterase (323 aa).

An Involved in the stabilization of the negatively charged intermediate by the formation of the oxyanion hole motif is present at residues histidine 91 to glycine 93. Active-site residues include serine 165, aspartate 262, and histidine 292.

Belongs to the 'GDXG' lipolytic enzyme family. As to quaternary structure, homodimer. Interacts with MalT and MelA.

Its subcellular location is the cytoplasm. In terms of biological role, displays esterase activity towards short chain fatty esters (acyl chain length of up to 8 carbons). Able to hydrolyze triacetylglycerol (triacetin) and tributyrylglycerol (tributyrin), but not trioleylglycerol (triolein) or cholesterol oleate. Negatively regulates MalT activity by antagonizing maltotriose binding. Inhibits MelA galactosidase activity. The chain is Acetyl esterase from Salmonella typhi.